A 173-amino-acid polypeptide reads, in one-letter code: ATP-dependent protease subunit HslV (173 aa).

The active site involves T2. Na(+) is bound by residues G158, D161, and S164.

The protein belongs to the peptidase T1B family. HslV subfamily. As to quaternary structure, a double ring-shaped homohexamer of HslV is capped on each side by a ring-shaped HslU homohexamer. The assembly of the HslU/HslV complex is dependent on binding of ATP.

The protein localises to the cytoplasm. It carries out the reaction ATP-dependent cleavage of peptide bonds with broad specificity.. Its activity is regulated as follows. Allosterically activated by HslU binding. Protease subunit of a proteasome-like degradation complex believed to be a general protein degrading machinery. This chain is ATP-dependent protease subunit HslV, found in Mannheimia haemolytica (Pasteurella haemolytica).